Reading from the N-terminus, the 300-residue chain is Arrestin domain-containing protein 4 (300 aa).

Short sequence motifs (PPxY motif) lie at residues 231–234 (PPNY) and 276–279 (PPLY).

The protein belongs to the arrestin family. As to quaternary structure, interacts with ADRB2. Interacts (via PPxY motifs) with ITCH, NEDD4L and WWP2. Interacts with AVPR2. Identified in a complex containing at least ARRDC4, AVPR2 and HGS. Interacts with SLC11A2; controls the incorporation of SLC11A2 into extracellular vesicles through an ubiquitination-dependent mechanism. Interacts with TRIM65.

Its subcellular location is the early endosome. It is found in the cell membrane. The protein resides in the cytoplasmic vesicle. Functionally, functions as an adapter recruiting ubiquitin-protein ligases to their specific substrates. Plays a role in endocytosis of activated G protein-coupled receptors (GPCRs) Through an ubiquitination-dependent mechanism also plays a role in the incorporation of SLC11A2 into extracellular vesicles. May play a role in glucose uptake. Participates in innate immune response by promoting IFIH1/MDA5 activation through interaction with TRIM65. This Rattus norvegicus (Rat) protein is Arrestin domain-containing protein 4 (Arrdc4).